We begin with the raw amino-acid sequence, 552 residues long: Leiomodin-2 (552 aa).

Positions 1 to 47 (MSTFGYRRELSKYEDIDEDELLASLTEEELKELERELEDIEPDRNLP) are interaction with tropomyosin alpha. Interaction with actin stretches follow at residues 1–169 (MSTF…SSHV) and 170–498 (RHKK…KEIK). Residues 13 to 46 (YEDIDEDELLASLTEEELKELERELEDIEPDRNL) are a coiled coil. Disordered regions lie at residues 33–67 (LERE…FSRE), 87–191 (GACE…DGKD), and 364–531 (MDKQ…DNLM). A compositionally biased stretch (polar residues) spans 51 to 64 (RQKSLTEKTPTGTF). A coiled-coil region spans residues 86 to 151 (LGACEKDSEQ…DDEDEEKQNS (66 aa)). Composition is skewed to acidic residues over residues 93-108 (SEQE…EECF) and 115-147 (VSEE…EDEE). Positions 364–377 (MDKQRQKRMQEQRQ) are enriched in basic and acidic residues. A compositionally biased stretch (low complexity) spans 398–415 (PRSSPYTSPKSSPWSSPK). Positions 425 to 450 (SQPPAPAPPPPPPPPPPPPPPPPPVI) are enriched in pro residues. Residues 478-488 (QKKKKGKKGKK) show a composition bias toward basic residues. The segment covering 489–513 (HENSILKEIKDSLKSVSDRKSEEGS) has biased composition (basic and acidic residues). Residues 514-524 (RPSTRPSTPQR) show a composition bias toward polar residues. The interval 526 to 545 (LHDNLMEAIRASSIKQLRRV) is interaction with actin 3. Residues 526-545 (LHDNLMEAIRASSIKQLRRV) enclose the WH2 domain.

The protein belongs to the tropomodulin family. Can bind at least three actin monomers and thereby provides a nucleus for actin filament formation. Interacts (via N-terminus) with tropomyosin alpha (TPM1) (via N-terminus). May also interact with TPM2 (via N-terminus).

Its subcellular location is the cytoplasm. It localises to the myofibril. The protein resides in the sarcomere. The protein localises to the m line. It is found in the cytoskeleton. Functionally, mediates nucleation of actin filaments and thereby promotes actin polymerization. Plays a role in the regulation of actin filament length. Required for normal sarcomere organization in the heart, and for normal heart function. The protein is Leiomodin-2 (LMOD2) of Gallus gallus (Chicken).